Here is a 234-residue protein sequence, read N- to C-terminus: Phosphoglycolate phosphatase (234 aa).

Aspartate 8 acts as the Nucleophile in catalysis. Residues aspartate 8 and aspartate 10 each coordinate Mg(2+). Position 157 (lysine 157) interacts with substrate. Residues aspartate 180 and aspartate 184 each coordinate Mg(2+).

This sequence belongs to the archaeal SPP-like hydrolase family. The cofactor is Mg(2+).

It carries out the reaction 2-phosphoglycolate + H2O = glycolate + phosphate. In terms of biological role, catalyzes the dephosphorylation of 2-phosphoglycolate. This Methanoculleus marisnigri (strain ATCC 35101 / DSM 1498 / JR1) protein is Phosphoglycolate phosphatase.